Consider the following 422-residue polypeptide: p-hydroxyphenylacetate 3-hydroxylase, oxygenase component (422 aa).

Residue Trp112 coordinates FMN. Substrate-binding residues include His120 and Ser146. Residues 146-148 (SSI) and 169-171 (WSS) each bind FMN. A substrate-binding site is contributed by 263-266 (RPYF). Residues Arg292, Tyr296, 374–375 (AT), and 396–397 (HA) each bind FMN. Tyr296 provides a ligand contact to substrate.

It belongs to the HpaH/HsaA monooxygenase family. As to quaternary structure, homotetramer. The p-hydroxyphenylacetate 3-hydroxylase (HpaH) is composed of an oxygenase component C2 and a reductase component C1.

It carries out the reaction 4-hydroxyphenylacetate + FMNH2 + O2 = 3,4-dihydroxyphenylacetate + FMN + H2O + H(+). The catalysed reaction is 4-hydroxyphenylacetate + FADH2 + O2 = 3,4-dihydroxyphenylacetate + FAD + H2O + H(+). It functions in the pathway aromatic compound metabolism; 4-hydroxyphenylacetate degradation; pyruvate and succinate semialdehyde from 4-hydroxyphenylacetate: step 1/7. Inhibited by flavin concentrations greater than 15 uM. Also inhibited by excess p-hydroxyphenylacetate (HPA). Functionally, oxygenase component of a two-component system that utilizes reduced FMN (FMNH2) supplied by the reductase component to catalyze the hydroxylation of 4-hydroxyphenylacetic acid, leading to the production of 3,4-dihydroxyphenylacetate (3,4-DHPA). Also utilizes other reduced flavins such as FADH2 and reduced riboflavin to a lesser extent. Only the compounds with a hydroxyl group in the para (p-) position can be hydroxylated. May also oxidize phenol to catechol, and hydroxylate other phenol derivatives. In Acinetobacter baumannii, this protein is p-hydroxyphenylacetate 3-hydroxylase, oxygenase component.